A 220-amino-acid polypeptide reads, in one-letter code: Phosphoserine phosphatase (220 aa).

D11 serves as the catalytic Nucleophile. Residues D11 and D13 each contribute to the Mg(2+) site. D13 functions as the Proton donor in the catalytic mechanism. Substrate contacts are provided by residues E20, R56, 99–100 (SG), and K144. Residue D167 coordinates Mg(2+). Residue N170 participates in substrate binding.

This sequence belongs to the HAD-like hydrolase superfamily. SerB family. Mg(2+) serves as cofactor.

It catalyses the reaction O-phospho-L-serine + H2O = L-serine + phosphate. The enzyme catalyses O-phospho-D-serine + H2O = D-serine + phosphate. It participates in amino-acid biosynthesis; L-serine biosynthesis; L-serine from 3-phospho-D-glycerate: step 3/3. This is Phosphoserine phosphatase from Idiomarina loihiensis (strain ATCC BAA-735 / DSM 15497 / L2-TR).